We begin with the raw amino-acid sequence, 196 residues long: Putative 3-methyladenine DNA glycosylase (196 aa).

The protein belongs to the DNA glycosylase MPG family.

This Bacillus licheniformis (strain ATCC 14580 / DSM 13 / JCM 2505 / CCUG 7422 / NBRC 12200 / NCIMB 9375 / NCTC 10341 / NRRL NRS-1264 / Gibson 46) protein is Putative 3-methyladenine DNA glycosylase.